Reading from the N-terminus, the 466-residue chain is Cysteine--tRNA ligase (466 aa).

Residue Cys-28 coordinates Zn(2+). The 'HIGH' region signature appears at Pro-30 to Asn-40. Zn(2+)-binding residues include Cys-208, His-233, and Glu-237. The 'KMSKS' region signature appears at Lys-265–Ser-269. Residue Lys-268 participates in ATP binding.

It belongs to the class-I aminoacyl-tRNA synthetase family. As to quaternary structure, monomer. Requires Zn(2+) as cofactor.

It localises to the cytoplasm. It catalyses the reaction tRNA(Cys) + L-cysteine + ATP = L-cysteinyl-tRNA(Cys) + AMP + diphosphate. In Staphylococcus aureus (strain USA300), this protein is Cysteine--tRNA ligase.